Reading from the N-terminus, the 275-residue chain is Formamidopyrimidine-DNA glycosylase (275 aa).

Catalysis depends on Pro2, which acts as the Schiff-base intermediate with DNA. The active-site Proton donor is the Glu3. The Proton donor; for beta-elimination activity role is filled by Lys59. Positions 92, 111, and 155 each coordinate DNA. The segment at 240–274 adopts an FPG-type zinc-finger fold; the sequence is NVYGRAGKACPKCGTTIEKQVLGQRSSYYCPQCQR. Residue Arg264 is the Proton donor; for delta-elimination activity of the active site.

It belongs to the FPG family. Monomer. It depends on Zn(2+) as a cofactor.

The catalysed reaction is Hydrolysis of DNA containing ring-opened 7-methylguanine residues, releasing 2,6-diamino-4-hydroxy-5-(N-methyl)formamidopyrimidine.. It catalyses the reaction 2'-deoxyribonucleotide-(2'-deoxyribose 5'-phosphate)-2'-deoxyribonucleotide-DNA = a 3'-end 2'-deoxyribonucleotide-(2,3-dehydro-2,3-deoxyribose 5'-phosphate)-DNA + a 5'-end 5'-phospho-2'-deoxyribonucleoside-DNA + H(+). Its function is as follows. Involved in base excision repair of DNA damaged by oxidation or by mutagenic agents. Acts as a DNA glycosylase that recognizes and removes damaged bases. Has a preference for oxidized purines, such as 7,8-dihydro-8-oxoguanine (8-oxoG). Has AP (apurinic/apyrimidinic) lyase activity and introduces nicks in the DNA strand. Cleaves the DNA backbone by beta-delta elimination to generate a single-strand break at the site of the removed base with both 3'- and 5'-phosphates. The chain is Formamidopyrimidine-DNA glycosylase from Magnetococcus marinus (strain ATCC BAA-1437 / JCM 17883 / MC-1).